The chain runs to 737 residues: Zinc finger protein 585A (737 aa).

The KRAB domain maps to 1–65 (MAAPTREEWR…QGERPRQSCP (65 aa)). 6 C2H2-type zinc fingers span residues 126–148 (YVCI…QKTH), 154–176 (FKCN…QRIH), 182–204 (YECS…EKIH), 210–232 (HECT…QKIH), 238–260 (YICI…RRIH), and 266–288 (YECS…QRVH). The C2H2-type 7; degenerate zinc finger occupies 294–316 (YICTEYGKVFSNNSNLITHKKVQ). 15 consecutive C2H2-type zinc fingers follow at residues 322–344 (SICT…QRIH), 350–372 (YACS…QRIH), 378–400 (YICM…QIIH), 406–428 (YKCG…KRIH), 434–456 (YMCN…QKTH), 462–484 (YICS…QRIH), 490–512 (YECS…QKIH), 518–540 (YECH…QKIH), 546–568 (YVCT…QRIH), 574–596 (YECS…QPLH), 602–624 (YVCA…QKTH), 630–652 (YICS…HRIH), 658–680 (YECS…QRIH), 686–708 (YVCA…QTTH), and 714–736 (YKCG…QSNH).

The protein belongs to the krueppel C2H2-type zinc-finger protein family.

It is found in the nucleus. Its function is as follows. May be involved in transcriptional regulation. The protein is Zinc finger protein 585A (ZNF585A) of Pongo abelii (Sumatran orangutan).